A 285-amino-acid polypeptide reads, in one-letter code: mRNA decay factor CTH2 (285 aa).

The tract at residues 37-55 (INIRELEEYYNKTILNEDN) is required for mRNA decay activity. A disordered region spans residues 132-164 (LQQLSQQKPKNDASFSSEKESSAQPKVKSQVQE). Positions 153–164 (SAQPKVKSQVQE) are enriched in polar residues. 2 consecutive C3H1-type zinc fingers follow at residues 169–197 (LYKT…HGLG) and 207–235 (NFRT…HGDD). The disordered stretch occupies residues 252 to 271 (STSKQSDEKRSNGRGSAKKK).

In terms of assembly, interacts with DHH1.

The protein localises to the nucleus. It is found in the cytoplasm. It localises to the P-body. Functionally, binds to specific AU-rich elements (ARE) in the 3'-untranslated region of target mRNAs and promotes their degradation. In response to iron deficiency, promotes the decay of many mRNAs encoding proteins involved in iron-dependent pathways. Recruits the DHH1 helicase to the SDH4 mRNA and promotes SDH4 mRNA decay. Also destabilizes target mRNA by modulating 3'-end processing, creating extended transcripts that are prone for degradation. The protein is mRNA decay factor CTH2 (TIS11) of Saccharomyces cerevisiae (strain ATCC 204508 / S288c) (Baker's yeast).